A 303-amino-acid polypeptide reads, in one-letter code: Ornithine carbamoyltransferase (303 aa).

Carbamoyl phosphate is bound by residues Ser53–Thr56, Gln80, Arg104, and His131–Gln134. L-ornithine is bound by residues Asn162, Asp222, and Ser226–Met227. Residues Cys261–Leu262 and Arg289 each bind carbamoyl phosphate.

This sequence belongs to the aspartate/ornithine carbamoyltransferase superfamily. OTCase family.

It is found in the cytoplasm. It carries out the reaction carbamoyl phosphate + L-ornithine = L-citrulline + phosphate + H(+). It functions in the pathway amino-acid biosynthesis; L-arginine biosynthesis; L-arginine from L-ornithine and carbamoyl phosphate: step 1/3. In terms of biological role, reversibly catalyzes the transfer of the carbamoyl group from carbamoyl phosphate (CP) to the N(epsilon) atom of ornithine (ORN) to produce L-citrulline. This Mesorhizobium japonicum (strain LMG 29417 / CECT 9101 / MAFF 303099) (Mesorhizobium loti (strain MAFF 303099)) protein is Ornithine carbamoyltransferase.